Reading from the N-terminus, the 246-residue chain is Pyridoxine 5'-phosphate synthase (246 aa).

Residue asparagine 12 participates in 3-amino-2-oxopropyl phosphate binding. Residue 14–15 (DH) coordinates 1-deoxy-D-xylulose 5-phosphate. Arginine 23 contributes to the 3-amino-2-oxopropyl phosphate binding site. The active-site Proton acceptor is the histidine 48. Residues arginine 50 and histidine 55 each contribute to the 1-deoxy-D-xylulose 5-phosphate site. The active-site Proton acceptor is the glutamate 75. Residue threonine 105 participates in 1-deoxy-D-xylulose 5-phosphate binding. The active-site Proton donor is the histidine 196. Residues glycine 197 and 218–219 (GH) each bind 3-amino-2-oxopropyl phosphate.

Belongs to the PNP synthase family. As to quaternary structure, homooctamer; tetramer of dimers.

It is found in the cytoplasm. It catalyses the reaction 3-amino-2-oxopropyl phosphate + 1-deoxy-D-xylulose 5-phosphate = pyridoxine 5'-phosphate + phosphate + 2 H2O + H(+). Its pathway is cofactor biosynthesis; pyridoxine 5'-phosphate biosynthesis; pyridoxine 5'-phosphate from D-erythrose 4-phosphate: step 5/5. Catalyzes the complicated ring closure reaction between the two acyclic compounds 1-deoxy-D-xylulose-5-phosphate (DXP) and 3-amino-2-oxopropyl phosphate (1-amino-acetone-3-phosphate or AAP) to form pyridoxine 5'-phosphate (PNP) and inorganic phosphate. The sequence is that of Pyridoxine 5'-phosphate synthase from Pseudomonas putida (strain ATCC 47054 / DSM 6125 / CFBP 8728 / NCIMB 11950 / KT2440).